A 203-amino-acid chain; its full sequence is Dephospho-CoA kinase (203 aa).

In terms of domain architecture, DPCK spans 6–203; sequence KVAITGGLSC…ELYQELKIYI (198 aa). 14–19 serves as a coordination point for ATP; the sequence is SCGKSS.

It belongs to the CoaE family.

Its subcellular location is the cytoplasm. It carries out the reaction 3'-dephospho-CoA + ATP = ADP + CoA + H(+). It functions in the pathway cofactor biosynthesis; coenzyme A biosynthesis; CoA from (R)-pantothenate: step 5/5. Its function is as follows. Catalyzes the phosphorylation of the 3'-hydroxyl group of dephosphocoenzyme A to form coenzyme A. In Protochlamydia amoebophila (strain UWE25), this protein is Dephospho-CoA kinase.